A 550-amino-acid polypeptide reads, in one-letter code: MKKKYKTKFPMARIKKIMQKDEEVGKIASATPILISQCLELFMADLVMKTCKITQAKKGKVISVNHLKECIKQESTFDFLTEIVDRIPDDKNEKRGRPKKTEGEDGGEEEEEEEEEMDMGEEEEEEEDEDDDDSDEEEEEAPKKGGKGSRGGKGSRGGRGGARGGASTRKVKSETSPVLKNTTITTTTATTTPTPTPTPNFANSPKDIQSTSLKKPSARKSNTTSPKSSPFLSSSAGSIQSPPLNNNNNNNNNNNNNNNNNGNFNNNNNFNNNNNNFNNNNNFNNNNFNNNNNNNNFNNNSNNNNNNFNNNNFNNNNYNSNEDENNNNNNNNNNKNNNNNNNSNNSNNNNRGQQFLSSSTASTITLPSNQYQPLAPISLPVLNNSNNNNSSNNNNNNNNNNNNNNNNNNEHILGNLNNNNSNRKINTNFDEEDSNHNINKSNINSIMNSSNNSIDNKDNGFNSFTFSNNNSNFNDNNNYNPNNPNNNNDNNGNGIVLPSLSSTNSSSTLPSFSSVPPILNTNNSNSNNSISHILNNLNSKKPNVEDEDFD.

The Histone-fold domain maps to 7–71; it reads TKFPMARIKK…ISVNHLKECI (65 aa). A compositionally biased stretch (basic and acidic residues) spans 89-103; it reads DDKNEKRGRPKKTEG. Disordered regions lie at residues 89 to 355, 378 to 444, and 461 to 512; these read DDKN…GQQF, SLPV…SNIN, and FNSF…LPSF. Residues 104–140 are compositionally biased toward acidic residues; the sequence is EDGGEEEEEEEEEMDMGEEEEEEEDEDDDDSDEEEEE. The segment covering 148–164 has biased composition (gly residues); that stretch reads GSRGGKGSRGGRGGARG. Low complexity predominate over residues 182–193; sequence TTITTTTATTTP. Positions 200-224 are enriched in polar residues; the sequence is NFANSPKDIQSTSLKKPSARKSNTT. Low complexity-rich tracts occupy residues 225–238, 245–350, and 382–422; these read SPKS…SAGS, NNNN…NNNN, and LNNS…NNSN.

It belongs to the NC2 alpha/DRAP1 family.

It is found in the nucleus. In terms of biological role, involved in transcriptional regulation. Component of the NC2 complex which represses RNA polymerase II transcription through binding to tbp and thereby inhibiting the assembly of the preinitiation complex. This chain is Dr1-associated corepressor homolog (drap1), found in Dictyostelium discoideum (Social amoeba).